Consider the following 88-residue polypeptide: MGTARFLSAVLLLSVLLMVTFPALLSAEYHDGRVDICSLPSDSGDCLRFFEMWYFDGTTCTKFVYGGCGGNDNRFPTEKACMKRCAKA.

The signal sequence occupies residues 1 to 27 (MGTARFLSAVLLLSVLLMVTFPALLSA). The propeptide occupies 28–33 (EYHDGR). One can recognise a BPTI/Kunitz inhibitor domain in the interval 37-85 (CSLPSDSGDCLRFFEMWYFDGTTCTKFVYGGCGGNDNRFPTEKACMKRC). Disulfide bonds link C37-C85, C46-C68, and C60-C81.

The protein belongs to the venom Kunitz-type family. 03 (sub-Kunitz) subfamily. Expressed by the venom gland.

The protein resides in the secreted. Functionally, serine protease inhibitor that inhibits trypsin at a molar ratio of 1:1. The protein is Kunitz-type U15-theraphotoxin-Hs1g of Cyriopagopus schmidti (Chinese bird spider).